The chain runs to 302 residues: Cuticle collagen 40 (302 aa).

Disordered stretches follow at residues 79–103 (RIKR…GGGG) and 119–302 (AGAP…APGY). A compositionally biased stretch (gly residues) spans 91–103 (YAEGGAAAGGGGG). 5 triple-helical region regions span residues 114 to 143 (GAAG…AGSD), 162 to 185 (GPAG…DGNT), 189 to 221 (GGEG…PGQV), 226 to 252 (GTPG…AGAS), and 255 to 290 (GPAG…GGGC). Positions 137 to 154 (PGTAGSDAEAAAAPTASD) are enriched in low complexity. Over residues 194 to 203 (AGPPGPPGPA) the composition is skewed to pro residues. Composition is skewed to low complexity over residues 205 to 234 (NPGT…AGAA) and 245 to 281 (NPGS…PGEA). A compositionally biased stretch (pro residues) spans 293–302 (CPPPRTAPGY).

It belongs to the cuticular collagen family. As to quaternary structure, collagen polypeptide chains are complexed within the cuticle by disulfide bonds and other types of covalent cross-links.

Its function is as follows. Nematode cuticles are composed largely of collagen-like proteins. The cuticle functions both as an exoskeleton and as a barrier to protect the worm from its environment. In Caenorhabditis elegans, this protein is Cuticle collagen 40 (col-40).